The chain runs to 172 residues: Large ribosomal subunit protein uL10 (172 aa).

It belongs to the universal ribosomal protein uL10 family. Part of the ribosomal stalk of the 50S ribosomal subunit. The N-terminus interacts with L11 and the large rRNA to form the base of the stalk. The C-terminus forms an elongated spine to which L12 dimers bind in a sequential fashion forming a multimeric L10(L12)X complex.

Its function is as follows. Forms part of the ribosomal stalk, playing a central role in the interaction of the ribosome with GTP-bound translation factors. This chain is Large ribosomal subunit protein uL10, found in Rhodopseudomonas palustris (strain TIE-1).